We begin with the raw amino-acid sequence, 216 residues long: Ribosomal RNA small subunit methyltransferase G (216 aa).

Residues glycine 82, leucine 87, alanine 135–glutamate 136, and arginine 148 contribute to the S-adenosyl-L-methionine site.

It belongs to the methyltransferase superfamily. RNA methyltransferase RsmG family.

It is found in the cytoplasm. It carries out the reaction guanosine(527) in 16S rRNA + S-adenosyl-L-methionine = N(7)-methylguanosine(527) in 16S rRNA + S-adenosyl-L-homocysteine. Specifically methylates the N7 position of guanine in position 527 of 16S rRNA. The protein is Ribosomal RNA small subunit methyltransferase G of Caulobacter vibrioides (strain ATCC 19089 / CIP 103742 / CB 15) (Caulobacter crescentus).